The primary structure comprises 129 residues: Large ribosomal subunit protein bL12c (129 aa).

It belongs to the bacterial ribosomal protein bL12 family. As to quaternary structure, homodimer. Part of the ribosomal stalk of the 50S ribosomal subunit. Forms a multimeric L10(L12)X complex, where L10 forms an elongated spine to which 2 to 4 L12 dimers bind in a sequential fashion. Binds GTP-bound translation factors.

The protein localises to the plastid. It is found in the chloroplast. Forms part of the ribosomal stalk which helps the ribosome interact with GTP-bound translation factors. Is thus essential for accurate translation. The protein is Large ribosomal subunit protein bL12c of Tupiella akineta (Green alga).